We begin with the raw amino-acid sequence, 541 residues long: Membrane protein insertase YidC (541 aa).

5 consecutive transmembrane segments (helical) span residues 7–27, 345–365, 415–435, 453–473, and 492–512; these read LLFM…QVDY, LVQN…AVLY, LGGC…YWTF, LSAQ…MFLL, and FMPL…VLYW.

The protein belongs to the OXA1/ALB3/YidC family. Type 1 subfamily. Interacts with the Sec translocase complex via SecD. Specifically interacts with transmembrane segments of nascent integral membrane proteins during membrane integration.

Its subcellular location is the cell inner membrane. In terms of biological role, required for the insertion and/or proper folding and/or complex formation of integral membrane proteins into the membrane. Involved in integration of membrane proteins that insert both dependently and independently of the Sec translocase complex, as well as at least some lipoproteins. Aids folding of multispanning membrane proteins. The chain is Membrane protein insertase YidC from Histophilus somni (strain 2336) (Haemophilus somnus).